We begin with the raw amino-acid sequence, 750 residues long: Methylmalonyl-CoA mutase, mitochondrial (750 aa).

Residues Met1–Leu32 constitute a mitochondrion transit peptide. Gln50 is a malonyl-CoA binding site. Residue Lys89 is modified to N6-acetyllysine. Malonyl-CoA is bound by residues Tyr96–Met99 and Thr106–Tyr110. An N6-acetyllysine modification is found at Lys212. Residues Thr216 to Gln218, Arg228, Lys255, His265, and Arg304 to Ser306 contribute to the malonyl-CoA site. Position 335 is an N6-acetyllysine (Lys335). N6-succinyllysine is present on Lys343. Ser481 bears the Phosphoserine mark. Lys595 is subject to N6-succinyllysine. Lys602 bears the N6-acetyllysine mark. Residues Arg614–Lys746 enclose the B12-binding domain. His627 contacts adenosylcob(III)alamin.

Belongs to the methylmalonyl-CoA mutase family. As to quaternary structure, homodimer. Interacts (the apoenzyme form) with MMAA; the interaction is GTP dependent. It depends on adenosylcob(III)alamin as a cofactor.

It localises to the mitochondrion matrix. The protein resides in the mitochondrion. Its subcellular location is the cytoplasm. It carries out the reaction (R)-methylmalonyl-CoA = succinyl-CoA. Inhibited by itaconyl-CoA, a metabolite that inactivates the coenzyme B12 cofactor. Catalyzes the reversible isomerization of methylmalonyl-CoA (MMCoA) (generated from branched-chain amino acid metabolism and degradation of dietary odd chain fatty acids and cholesterol) to succinyl-CoA (3-carboxypropionyl-CoA), a key intermediate of the tricarboxylic acid cycle. The polypeptide is Methylmalonyl-CoA mutase, mitochondrial (MMUT) (Pongo abelii (Sumatran orangutan)).